Consider the following 513-residue polypeptide: ATP synthase subunit alpha (513 aa).

169–176 lines the ATP pocket; that stretch reads GDRQTGKT.

It belongs to the ATPase alpha/beta chains family. As to quaternary structure, F-type ATPases have 2 components, CF(1) - the catalytic core - and CF(0) - the membrane proton channel. CF(1) has five subunits: alpha(3), beta(3), gamma(1), delta(1), epsilon(1). CF(0) has three main subunits: a(1), b(2) and c(9-12). The alpha and beta chains form an alternating ring which encloses part of the gamma chain. CF(1) is attached to CF(0) by a central stalk formed by the gamma and epsilon chains, while a peripheral stalk is formed by the delta and b chains.

Its subcellular location is the cell inner membrane. It catalyses the reaction ATP + H2O + 4 H(+)(in) = ADP + phosphate + 5 H(+)(out). Functionally, produces ATP from ADP in the presence of a proton gradient across the membrane. The alpha chain is a regulatory subunit. The protein is ATP synthase subunit alpha of Thiobacillus denitrificans (strain ATCC 25259 / T1).